Consider the following 394-residue polypeptide: Elongation factor Tu 2 (394 aa).

The region spanning 10–204 (KPHVNVGTIG…ALDSYIPEPE (195 aa)) is the tr-type G domain. The tract at residues 19–26 (GHVDHGKT) is G1. 19 to 26 (GHVDHGKT) is a binding site for GTP. Thr26 serves as a coordination point for Mg(2+). Residues 60 to 64 (GITIS) form a G2 region. The G3 stretch occupies residues 81 to 84 (DCPG). Residues 81-85 (DCPGH) and 136-139 (NKCD) contribute to the GTP site. Residues 136–139 (NKCD) are G4. The tract at residues 174-176 (SAL) is G5.

Belongs to the TRAFAC class translation factor GTPase superfamily. Classic translation factor GTPase family. EF-Tu/EF-1A subfamily. Monomer.

Its subcellular location is the cytoplasm. It catalyses the reaction GTP + H2O = GDP + phosphate + H(+). Functionally, GTP hydrolase that promotes the GTP-dependent binding of aminoacyl-tRNA to the A-site of ribosomes during protein biosynthesis. This is Elongation factor Tu 2 from Pseudoalteromonas translucida (strain TAC 125).